Here is a 101-residue protein sequence, read N- to C-terminus: Gamma-secretase subunit PEN-2 (101 aa).

Residues 1-17 (MNLERVSNEEKLNLCRK) are Cytoplasmic-facing. An intramembrane region (helical) is located at residues 18–36 (YYLGGFAFLPFLWLVNIFW). At 37-57 (FFKEAFFAPAYTEQSQIKGYV) the chain is on the cytoplasmic side. The helical transmembrane segment at 58 to 78 (WRSAVGFLFWVIVLTTWITIF) threads the bilayer. The Lumenal portion of the chain corresponds to 79–101 (QIYRPRWGALGDYLSFTIPLGTP).

Belongs to the PEN-2 family. In terms of assembly, the functional gamma-secretase complex is composed of at least four polypeptides: a presenilin homodimer (PSEN1 or PSEN2), nicastrin (NCSTN), APH1 (APH1A or APH1B) and PSENEN.

The protein localises to the endoplasmic reticulum membrane. It localises to the golgi apparatus. The protein resides in the golgi stack membrane. Its subcellular location is the cell membrane. It is found in the membrane. Functionally, essential subunit of the gamma-secretase complex, an endoprotease complex that catalyzes the intramembrane cleavage of integral membrane proteins such as Notch receptors and APP (amyloid-beta precursor protein). The gamma-secretase complex plays a role in Notch and Wnt signaling cascades and regulation of downstream processes via its role in processing key regulatory proteins, and by regulating cytosolic CTNNB1 levels. PSENEN modulates both endoproteolysis of presenilin and gamma-secretase activity. This Rattus norvegicus (Rat) protein is Gamma-secretase subunit PEN-2 (Psenen).